The sequence spans 645 residues: tRNA 5-methylaminomethyl-2-thiouridine biosynthesis bifunctional protein MnmC (645 aa).

The tRNA (mnm(5)s(2)U34)-methyltransferase stretch occupies residues 1-230 (MPMSEPIDWL…KRHNLHAVFD (230 aa)). The FAD-dependent cmnm(5)s(2)U34 oxidoreductase stretch occupies residues 254–645 (LGAGIAGAAA…LASERLGRRR (392 aa)).

It in the N-terminal section; belongs to the methyltransferase superfamily. tRNA (mnm(5)s(2)U34)-methyltransferase family. The protein in the C-terminal section; belongs to the DAO family. Requires FAD as cofactor.

Its subcellular location is the cytoplasm. The catalysed reaction is 5-aminomethyl-2-thiouridine(34) in tRNA + S-adenosyl-L-methionine = 5-methylaminomethyl-2-thiouridine(34) in tRNA + S-adenosyl-L-homocysteine + H(+). Catalyzes the last two steps in the biosynthesis of 5-methylaminomethyl-2-thiouridine (mnm(5)s(2)U) at the wobble position (U34) in tRNA. Catalyzes the FAD-dependent demodification of cmnm(5)s(2)U34 to nm(5)s(2)U34, followed by the transfer of a methyl group from S-adenosyl-L-methionine to nm(5)s(2)U34, to form mnm(5)s(2)U34. The chain is tRNA 5-methylaminomethyl-2-thiouridine biosynthesis bifunctional protein MnmC from Delftia acidovorans (strain DSM 14801 / SPH-1).